The following is a 389-amino-acid chain: S-adenosylmethionine synthase (389 aa).

Residue H17 participates in ATP binding. D19 is a binding site for Mg(2+). E45 lines the K(+) pocket. 2 residues coordinate L-methionine: E58 and Q101. The segment at 101–111 (QSPDIAQGVTE) is flexible loop. Residues 168 to 170 (DSK), 234 to 235 (RF), D243, 249 to 250 (RK), A266, and K270 each bind ATP. Residue D243 participates in L-methionine binding. K274 lines the L-methionine pocket.

Belongs to the AdoMet synthase family. As to quaternary structure, homotetramer; dimer of dimers. Requires Mg(2+) as cofactor. K(+) serves as cofactor.

Its subcellular location is the cytoplasm. It catalyses the reaction L-methionine + ATP + H2O = S-adenosyl-L-methionine + phosphate + diphosphate. The protein operates within amino-acid biosynthesis; S-adenosyl-L-methionine biosynthesis; S-adenosyl-L-methionine from L-methionine: step 1/1. In terms of biological role, catalyzes the formation of S-adenosylmethionine (AdoMet) from methionine and ATP. The overall synthetic reaction is composed of two sequential steps, AdoMet formation and the subsequent tripolyphosphate hydrolysis which occurs prior to release of AdoMet from the enzyme. This is S-adenosylmethionine synthase from Geobacter sp. (strain M21).